The chain runs to 118 residues: Fluoride-specific ion channel FluC 1 (118 aa).

4 consecutive transmembrane segments (helical) span residues 5 to 25, 39 to 59, 61 to 81, and 98 to 118; these read FLLV…ISIF, FFIN…ALGP, WQLF…TFKV, and YVGL…MLGV. Na(+)-binding residues include G71 and T74.

It belongs to the fluoride channel Fluc/FEX (TC 1.A.43) family.

It is found in the cell membrane. It carries out the reaction fluoride(in) = fluoride(out). Na(+) is not transported, but it plays an essential structural role and its presence is essential for fluoride channel function. Functionally, fluoride-specific ion channel. Important for reducing fluoride concentration in the cell, thus reducing its toxicity. This is Fluoride-specific ion channel FluC 1 from Listeria innocua serovar 6a (strain ATCC BAA-680 / CLIP 11262).